The following is a 468-amino-acid chain: Immunoglobulin superfamily member 21 (468 aa).

The N-terminal stretch at 1-24 (MQAAPSLRRASCLLLAAILDLARG) is a signal peptide. In terms of domain architecture, Ig-like 1 spans 25–132 (YLTVNIEPLP…RATREKVVLA (108 aa)). Cys-46 and Cys-116 are oxidised to a cystine. Asn-82, Asn-165, and Asn-407 each carry an N-linked (GlcNAc...) asparagine glycan. Positions 344–429 (PKIMMTPSRA…GSTDTHTRLI (86 aa)) constitute an Ig-like 2 domain.

Interacts (Ig-like 1 domain) with NRXN2 (via Laminin G-like 1 domain) in a trans-interaction manner. As to expression, expressed in brain (at protein levels). Highly expressed in the pyramidal cell layer of the dorsal and ventral hippocampal CA1 and CA3 regions, layers 5 and 6 of the cortex, the thalamus and the pons and weakly expressed in the cerebellum. Expressed in neurons but not in glia.

The protein resides in the postsynaptic cell membrane. Involved in synaptic inhibition in the brain. Selectively regulates inhibitory presynaptic differentiation through interacting with presynaptic NRXN2. The polypeptide is Immunoglobulin superfamily member 21 (Igsf21) (Mus musculus (Mouse)).